A 500-amino-acid chain; its full sequence is Glycerol kinase (500 aa).

Thr13 contacts ADP. Positions 13, 14, and 15 each coordinate ATP. Thr13 lines the sn-glycerol 3-phosphate pocket. Arg17 contacts ADP. 4 residues coordinate sn-glycerol 3-phosphate: Arg83, Glu84, Tyr135, and Asp244. Arg83, Glu84, Tyr135, Asp244, and Gln245 together coordinate glycerol. Residues Thr266 and Gly309 each coordinate ADP. ATP is bound by residues Thr266, Gly309, Gln313, and Gly410. Residues Gly410 and Asn414 each coordinate ADP.

This sequence belongs to the FGGY kinase family.

The enzyme catalyses glycerol + ATP = sn-glycerol 3-phosphate + ADP + H(+). It functions in the pathway polyol metabolism; glycerol degradation via glycerol kinase pathway; sn-glycerol 3-phosphate from glycerol: step 1/1. With respect to regulation, inhibited by fructose 1,6-bisphosphate (FBP). In terms of biological role, key enzyme in the regulation of glycerol uptake and metabolism. Catalyzes the phosphorylation of glycerol to yield sn-glycerol 3-phosphate. The polypeptide is Glycerol kinase (Burkholderia vietnamiensis (strain G4 / LMG 22486) (Burkholderia cepacia (strain R1808))).